The chain runs to 304 residues: tRNA dimethylallyltransferase (304 aa).

Residue 10–17 (GPTASGKT) coordinates ATP. 12-17 (TASGKT) serves as a coordination point for substrate. Interaction with substrate tRNA regions lie at residues 35–38 (DSAL), 159–163 (QRLSR), and 240–245 (RCVGYR).

The protein belongs to the IPP transferase family. Monomer. Mg(2+) is required as a cofactor.

It carries out the reaction adenosine(37) in tRNA + dimethylallyl diphosphate = N(6)-dimethylallyladenosine(37) in tRNA + diphosphate. Catalyzes the transfer of a dimethylallyl group onto the adenine at position 37 in tRNAs that read codons beginning with uridine, leading to the formation of N6-(dimethylallyl)adenosine (i(6)A). In Shewanella putrefaciens (strain CN-32 / ATCC BAA-453), this protein is tRNA dimethylallyltransferase.